We begin with the raw amino-acid sequence, 169 residues long: ATP synthase subunit b (169 aa).

Residues 13 to 33 (LFLFQLINFLIIVFILKKFLF) traverse the membrane as a helical segment.

This sequence belongs to the ATPase B chain family. F-type ATPases have 2 components, F(1) - the catalytic core - and F(0) - the membrane proton channel. F(1) has five subunits: alpha(3), beta(3), gamma(1), delta(1), epsilon(1). F(0) has three main subunits: a(1), b(2) and c(10-14). The alpha and beta chains form an alternating ring which encloses part of the gamma chain. F(1) is attached to F(0) by a central stalk formed by the gamma and epsilon chains, while a peripheral stalk is formed by the delta and b chains.

The protein resides in the cell inner membrane. F(1)F(0) ATP synthase produces ATP from ADP in the presence of a proton or sodium gradient. F-type ATPases consist of two structural domains, F(1) containing the extramembraneous catalytic core and F(0) containing the membrane proton channel, linked together by a central stalk and a peripheral stalk. During catalysis, ATP synthesis in the catalytic domain of F(1) is coupled via a rotary mechanism of the central stalk subunits to proton translocation. Functionally, component of the F(0) channel, it forms part of the peripheral stalk, linking F(1) to F(0). The protein is ATP synthase subunit b of Endomicrobium trichonymphae.